Consider the following 158-residue polypeptide: Regulator of sigma D (158 aa).

This sequence belongs to the Rsd/AlgQ family. In terms of assembly, interacts with RpoD.

The protein resides in the cytoplasm. Functionally, binds RpoD and negatively regulates RpoD-mediated transcription activation by preventing the interaction between the primary sigma factor RpoD with the catalytic core of the RNA polymerase and with promoter DNA. May be involved in replacement of the RNA polymerase sigma subunit from RpoD to RpoS during the transition from exponential growth to the stationary phase. The chain is Regulator of sigma D from Escherichia coli (strain SMS-3-5 / SECEC).